A 225-amino-acid polypeptide reads, in one-letter code: PKHD-type hydroxylase YbiX (225 aa).

Residues 78-177 (TLSTPLFNRY…RVASFMWIQS (100 aa)) enclose the Fe2OG dioxygenase domain. Fe cation-binding residues include histidine 96, aspartate 98, and histidine 158. Arginine 168 is a 2-oxoglutarate binding site.

The cofactor is Fe(2+). L-ascorbate is required as a cofactor.

This chain is PKHD-type hydroxylase YbiX, found in Escherichia coli (strain 55989 / EAEC).